An 870-amino-acid polypeptide reads, in one-letter code: Patatin-like phospholipase domain-containing protein NCU11180 (870 aa).

Disordered regions lie at residues 1 to 24 (MADD…PPEA) and 131 to 158 (KVIK…KGVA). The span at 131 to 141 (KVIKTDRDEKR) shows a compositional bias: basic and acidic residues. Positions 142–155 (NKRGKDRKNKKPRK) are enriched in basic residues. The chain crosses the membrane as a helical span at residues 183–203 (WPFLLFVSFWIVGLGMAYLAT). Residues 281 to 320 (EEVERELESQSQNSDSGVASGEETSNTKAGGGNNGNDKKT) form a disordered region. Residues 289-308 (SQSQNSDSGVASGEETSNTK) show a composition bias toward polar residues. A PNPLA domain is found at 399–590 (LCLSGGATFA…RTDIPIKSLN (192 aa)). The GXSXG motif lies at 430-434 (GTSGG). The active-site Nucleophile is serine 432. Aspartate 577 acts as the Proton acceptor in catalysis. Disordered stretches follow at residues 735-786 (RRET…DRRG) and 804-870 (GREG…HSRT). Residues 818 to 834 (TEDELTMTELEGEDDDG) are compositionally biased toward acidic residues.

Belongs to the PLPL family.

It is found in the membrane. Functionally, probable lipid hydrolase. This is Patatin-like phospholipase domain-containing protein NCU11180 from Neurospora crassa (strain ATCC 24698 / 74-OR23-1A / CBS 708.71 / DSM 1257 / FGSC 987).